The following is a 354-amino-acid chain: Protein RecA (354 aa).

Residue 67 to 74 coordinates ATP; that stretch reads GPESSGKT.

Belongs to the RecA family.

The protein resides in the cytoplasm. In terms of biological role, can catalyze the hydrolysis of ATP in the presence of single-stranded DNA, the ATP-dependent uptake of single-stranded DNA by duplex DNA, and the ATP-dependent hybridization of homologous single-stranded DNAs. It interacts with LexA causing its activation and leading to its autocatalytic cleavage. This is Protein RecA from Hamiltonella defensa subsp. Acyrthosiphon pisum (strain 5AT).